The primary structure comprises 377 residues: Chaperone protein DnaJ (377 aa).

The J domain maps to 5–70; it reads DYYEVLGVSR…DKKAAYDQFG (66 aa). The CR-type zinc-finger motif lies at 133-211; sequence GLTKELRIPT…CHGDGRVEKS (79 aa). Zn(2+)-binding residues include C146, C149, C163, C166, C185, C188, C199, and C202. CXXCXGXG motif repeat units follow at residues 146–153, 163–170, 185–192, and 199–206; these read CDLCEGSG, CGTCHGQG, CPTCHGRG, and CTKCHGDG.

Belongs to the DnaJ family. Homodimer. Zn(2+) serves as cofactor.

It localises to the cytoplasm. Its function is as follows. Participates actively in the response to hyperosmotic and heat shock by preventing the aggregation of stress-denatured proteins and by disaggregating proteins, also in an autonomous, DnaK-independent fashion. Unfolded proteins bind initially to DnaJ; upon interaction with the DnaJ-bound protein, DnaK hydrolyzes its bound ATP, resulting in the formation of a stable complex. GrpE releases ADP from DnaK; ATP binding to DnaK triggers the release of the substrate protein, thus completing the reaction cycle. Several rounds of ATP-dependent interactions between DnaJ, DnaK and GrpE are required for fully efficient folding. Also involved, together with DnaK and GrpE, in the DNA replication of plasmids through activation of initiation proteins. This is Chaperone protein DnaJ from Shewanella baltica (strain OS223).